The sequence spans 320 residues: Nucleotide-binding protein Acid_7395 (320 aa).

Residues 1–34 (MPLRKKGAATTKAAATRKDSAKAPASSKRKDAPQ) are disordered. 44 to 51 (GLSGSGKG) contributes to the ATP binding site. 94-97 (DIRE) contacts GTP.

Belongs to the RapZ-like family.

Its function is as follows. Displays ATPase and GTPase activities. The polypeptide is Nucleotide-binding protein Acid_7395 (Solibacter usitatus (strain Ellin6076)).